The chain runs to 125 residues: Cystatin-like cysteine protease inhibitor EPIC2A (125 aa).

The first 21 residues, 1–21, serve as a signal peptide directing secretion; it reads MSFLRPTLALLAVTALVTTSA. The N-linked (GlcNAc...) asparagine glycan is linked to Asn-45. Residues 68–72 carry the Secondary area of contact motif; it reads QVVSG.

The protein belongs to the cystatin family.

The protein localises to the secreted. Secreted effector that interacts with and inhibits host apoplastic pathogenesis-related papain-like cysteine proteases. Inhibition of host proteases by a pathogen extracellular protease inhibitor forms a specific type of defense-counterdefense mechanism between plants and microbial pathogens. This is Cystatin-like cysteine protease inhibitor EPIC2A from Phytophthora infestans (strain T30-4) (Potato late blight agent).